We begin with the raw amino-acid sequence, 138 residues long: Cellular retinoic acid-binding protein 2 (138 aa).

Positions 21–31 match the Nuclear localization signal motif; sequence KVLGVNVMLRK. Lys-102 is covalently cross-linked (Glycyl lysine isopeptide (Lys-Gly) (interchain with G-Cter in SUMO)). Residue 133–135 participates in all-trans-retinoate binding; it reads RVY.

The protein belongs to the calycin superfamily. Fatty-acid binding protein (FABP) family. In terms of assembly, interacts with RXR and RARA. Interacts with importin alpha. Post-translationally, sumoylated in response to retinoic acid binding, sumoylation is critical for dissociation from ER and subsequent nuclear translocation.

The protein localises to the cytoplasm. It localises to the endoplasmic reticulum. Its subcellular location is the nucleus. Functionally, transports retinoic acid to the nucleus. Regulates the access of retinoic acid to the nuclear retinoic acid receptors. The protein is Cellular retinoic acid-binding protein 2 (CRABP2) of Homo sapiens (Human).